The chain runs to 447 residues: MKGYEVNFDGLVGPTHHYAGLSFGNEASTKNRNNLSNPKLAAKQGLLKMKALADMGMKQGVLAPHERPHVPMLRRLGFTGDDISVVAQAMRYSPELLSSLSSASPMWTANAATVSPSADSQDERVHFTAANLNNKFHRSIEAETTSQVLQAIFKNERHFVHHEALPQVALFGDEGAANHNRLGGDYAKRGVQVFVYGQQHLNNGLPGPKRYPARQTREASEAIARLHRLDEAHTVFVQQNPDVIDQGVFHNDVIAVSNQQVLFHHQHAFLNQDQAFAEIRQKMASIGEDFISIEVPENRVTVDDAVATYLFNSQILTRPDGGMTIVVPEESRQNAAVWSYLNDMIQMGTPIDAIQVYDLRESMRNGGGPACLRLRVALNETELNAVNPKVLMNDQLFMTLNQWVDKHYRDRLAQEDLADPHLLMESRMALDELTKILGLGSVYPFQK.

Residues 19 to 28, Asn110, and 137 to 138 each bind substrate; these read AGLSFGNEAS and HR. Residue Glu174 is part of the active site. Arg214 is a substrate binding site. His250 is an active-site residue. Asp252 and Asn365 together coordinate substrate. Catalysis depends on Cys371, which acts as the Nucleophile.

Belongs to the succinylarginine dihydrolase family. As to quaternary structure, homodimer.

The catalysed reaction is N(2)-succinyl-L-arginine + 2 H2O + 2 H(+) = N(2)-succinyl-L-ornithine + 2 NH4(+) + CO2. It participates in amino-acid degradation; L-arginine degradation via AST pathway; L-glutamate and succinate from L-arginine: step 2/5. In terms of biological role, catalyzes the hydrolysis of N(2)-succinylarginine into N(2)-succinylornithine, ammonia and CO(2). The sequence is that of N-succinylarginine dihydrolase from Acinetobacter baumannii (strain ATCC 17978 / DSM 105126 / CIP 53.77 / LMG 1025 / NCDC KC755 / 5377).